Consider the following 258-residue polypeptide: 5'-nucleotidase SurE (258 aa).

A divalent metal cation is bound by residues Asp-14, Asp-15, Ser-45, and Asn-101.

The protein belongs to the SurE nucleotidase family. Requires a divalent metal cation as cofactor.

The protein localises to the cytoplasm. It carries out the reaction a ribonucleoside 5'-phosphate + H2O = a ribonucleoside + phosphate. Functionally, nucleotidase that shows phosphatase activity on nucleoside 5'-monophosphates. This is 5'-nucleotidase SurE from Chlorobium phaeobacteroides (strain DSM 266 / SMG 266 / 2430).